The primary structure comprises 257 residues: UPF0246 protein SO_3540 (257 aa).

This sequence belongs to the UPF0246 family.

The sequence is that of UPF0246 protein SO_3540 from Shewanella oneidensis (strain ATCC 700550 / JCM 31522 / CIP 106686 / LMG 19005 / NCIMB 14063 / MR-1).